A 719-amino-acid polypeptide reads, in one-letter code: CRAL-TRIO domain-containing protein T23G5.2 (719 aa).

Residues 2–175 (VQTYRSPVRI…FIEELLKKTT (174 aa)) form the PRELI/MSF1 domain. Residues 319–495 (RPTVIKQYFP…FLGGSCLTTN (177 aa)) enclose the CRAL-TRIO domain. A GOLD domain is found at 524–681 (HSTYTSTATW…KCRLIYYYEI (158 aa)). Residues 700-719 (SSFSSIAPPTPPTPGTPRNP) form a disordered region. Residues 707–719 (PPTPPTPGTPRNP) are compositionally biased toward pro residues.

This chain is CRAL-TRIO domain-containing protein T23G5.2, found in Caenorhabditis elegans.